We begin with the raw amino-acid sequence, 328 residues long: Fructose-1,6-bisphosphatase class 1 (328 aa).

4 residues coordinate Mg(2+): glutamate 89, aspartate 110, leucine 112, and aspartate 113. Substrate contacts are provided by residues asparagine 206, tyrosine 234, 252 to 254 (YLY), and lysine 264. A Mg(2+)-binding site is contributed by glutamate 270.

It belongs to the FBPase class 1 family. Homotetramer. It depends on Mg(2+) as a cofactor.

Its subcellular location is the cytoplasm. It catalyses the reaction beta-D-fructose 1,6-bisphosphate + H2O = beta-D-fructose 6-phosphate + phosphate. It functions in the pathway carbohydrate biosynthesis; gluconeogenesis. The chain is Fructose-1,6-bisphosphatase class 1 from Wigglesworthia glossinidia brevipalpis.